The following is a 90-amino-acid chain: uncharacterized protein (90 aa).

Helical transmembrane passes span 5 to 27 (FDIL…IIYI), 40 to 62 (IYLS…TFVA), and 67 to 89 (MSVV…YSIV).

The protein localises to the cell membrane. This is an uncharacterized protein from Archaeoglobus fulgidus (strain ATCC 49558 / DSM 4304 / JCM 9628 / NBRC 100126 / VC-16).